A 166-amino-acid polypeptide reads, in one-letter code: Urease accessory protein UreE 2 (166 aa).

The disordered stretch occupies residues 135–154; sequence EHGAYGGGHHHSRAGEEDFN.

Belongs to the UreE family.

Its subcellular location is the cytoplasm. Its function is as follows. Involved in urease metallocenter assembly. Binds nickel. Probably functions as a nickel donor during metallocenter assembly. The polypeptide is Urease accessory protein UreE 2 (Pseudomonas syringae pv. syringae (strain B728a)).